The primary structure comprises 242 residues: Type III pantothenate kinase (242 aa).

7–14 lines the ATP pocket; that stretch reads DLGNSRFK. Residues Tyr91 and 98–101 each bind substrate; that span reads GVDR. Asp100 (proton acceptor) is an active-site residue. Thr121 is an ATP binding site. Substrate is bound at residue Thr171.

Belongs to the type III pantothenate kinase family. In terms of assembly, homodimer. The cofactor is NH4(+). Requires K(+) as cofactor.

The protein localises to the cytoplasm. The catalysed reaction is (R)-pantothenate + ATP = (R)-4'-phosphopantothenate + ADP + H(+). Its pathway is cofactor biosynthesis; coenzyme A biosynthesis; CoA from (R)-pantothenate: step 1/5. Its function is as follows. Catalyzes the phosphorylation of pantothenate (Pan), the first step in CoA biosynthesis. This Xanthomonas campestris pv. campestris (strain B100) protein is Type III pantothenate kinase.